The primary structure comprises 478 residues: Phosphoglycerate kinase 2, chloroplastic (478 aa).

The transit peptide at Met-1–Met-74 directs the protein to the chloroplast. A Phosphoserine modification is found at Ser-78. Residues Ala-96, Asp-97, Asn-99, Arg-113, Thr-135, His-136, Gly-138, Arg-139, Arg-194, His-226, and Arg-227 each coordinate (2R)-3-phosphoglycerate. ADP is bound at residue Gly-272. CDP is bound at residue Gly-272. Residues Lys-274 and Lys-278 each coordinate AMP. An ATP-binding site is contributed by Lys-278. Gly-296 contacts ADP. Gly-296 is a CDP binding site. 2 residues coordinate AMP: Gly-297 and Gly-369. Gly-297 and Gly-369 together coordinate ATP. CDP is bound by residues Gly-394 and Phe-399. Phe-399 serves as a coordination point for ADP. Residue Glu-400 participates in AMP binding. ATP contacts are provided by Glu-400, Asp-431, and Ser-432. Asp-431 is a Mg(2+) binding site.

Belongs to the phosphoglycerate kinase family. As to quaternary structure, monomer. Mg(2+) serves as cofactor.

The protein resides in the plastid. It is found in the chloroplast. The catalysed reaction is (2R)-3-phosphoglycerate + ATP = (2R)-3-phospho-glyceroyl phosphate + ADP. Its pathway is carbohydrate biosynthesis; Calvin cycle. This is Phosphoglycerate kinase 2, chloroplastic from Arabidopsis thaliana (Mouse-ear cress).